A 486-amino-acid polypeptide reads, in one-letter code: Siroheme synthase (486 aa).

A precorrin-2 dehydrogenase /sirohydrochlorin ferrochelatase region spans residues 1–203 (MNYFPIFANL…RQNTLAEREL (203 aa)). NAD(+) contacts are provided by residues 22–23 (AV) and 43–44 (KH). Serine 128 carries the post-translational modification Phosphoserine. Positions 217-486 (GSVSLVGAGP…LGTGQEQQAA (270 aa)) are uroporphyrinogen-III C-methyltransferase. Position 226 (proline 226) interacts with S-adenosyl-L-methionine. Residue aspartate 249 is the Proton acceptor of the active site. Lysine 271 (proton donor) is an active-site residue. Residues 302 to 304 (GGD), valine 307, 332 to 333 (TA), methionine 384, and glycine 413 contribute to the S-adenosyl-L-methionine site.

The protein in the N-terminal section; belongs to the precorrin-2 dehydrogenase / sirohydrochlorin ferrochelatase family. This sequence in the C-terminal section; belongs to the precorrin methyltransferase family.

It catalyses the reaction uroporphyrinogen III + 2 S-adenosyl-L-methionine = precorrin-2 + 2 S-adenosyl-L-homocysteine + H(+). The catalysed reaction is precorrin-2 + NAD(+) = sirohydrochlorin + NADH + 2 H(+). The enzyme catalyses siroheme + 2 H(+) = sirohydrochlorin + Fe(2+). It functions in the pathway cofactor biosynthesis; adenosylcobalamin biosynthesis; precorrin-2 from uroporphyrinogen III: step 1/1. Its pathway is cofactor biosynthesis; adenosylcobalamin biosynthesis; sirohydrochlorin from precorrin-2: step 1/1. It participates in porphyrin-containing compound metabolism; siroheme biosynthesis; precorrin-2 from uroporphyrinogen III: step 1/1. The protein operates within porphyrin-containing compound metabolism; siroheme biosynthesis; siroheme from sirohydrochlorin: step 1/1. It functions in the pathway porphyrin-containing compound metabolism; siroheme biosynthesis; sirohydrochlorin from precorrin-2: step 1/1. Multifunctional enzyme that catalyzes the SAM-dependent methylations of uroporphyrinogen III at position C-2 and C-7 to form precorrin-2 via precorrin-1. Then it catalyzes the NAD-dependent ring dehydrogenation of precorrin-2 to yield sirohydrochlorin. Finally, it catalyzes the ferrochelation of sirohydrochlorin to yield siroheme. The polypeptide is Siroheme synthase (Neisseria meningitidis serogroup A / serotype 4A (strain DSM 15465 / Z2491)).